Reading from the N-terminus, the 150-residue chain is D-aminoacyl-tRNA deacylase (150 aa).

Positions glycine 136–proline 137 match the Gly-cisPro motif, important for rejection of L-amino acids motif.

The protein belongs to the DTD family. In terms of assembly, homodimer.

The protein resides in the cytoplasm. The catalysed reaction is glycyl-tRNA(Ala) + H2O = tRNA(Ala) + glycine + H(+). It carries out the reaction a D-aminoacyl-tRNA + H2O = a tRNA + a D-alpha-amino acid + H(+). Functionally, an aminoacyl-tRNA editing enzyme that deacylates mischarged D-aminoacyl-tRNAs. Also deacylates mischarged glycyl-tRNA(Ala), protecting cells against glycine mischarging by AlaRS. Acts via tRNA-based rather than protein-based catalysis; rejects L-amino acids rather than detecting D-amino acids in the active site. By recycling D-aminoacyl-tRNA to D-amino acids and free tRNA molecules, this enzyme counteracts the toxicity associated with the formation of D-aminoacyl-tRNA entities in vivo and helps enforce protein L-homochirality. This chain is D-aminoacyl-tRNA deacylase, found in Macrococcus caseolyticus (strain JCSC5402) (Macrococcoides caseolyticum).